The primary structure comprises 556 residues: Putative solute carrier family 22 member 31 (556 aa).

At 1–23 (MEQEARVLRAAGGFGRARRLLAS) the chain is on the cytoplasmic side. A helical membrane pass occupies residues 24 to 44 (ASWVPCIVLGLVLSSEELLTA). The Extracellular segment spans residues 45–128 (QPAPHCRPDP…WNLVCGDGWK (84 aa)). A helical transmembrane segment spans residues 129–149 (VPLEQVSHLLGWLLGCVILGA). Topologically, residues 150 to 157 (GCDRFGRR) are cytoplasmic. Residues 158–178 (AVFVASLVLTTGLGASEALAA) form a helical membrane-spanning segment. Topologically, residues 179–182 (SFPT) are extracellular. A helical transmembrane segment spans residues 183–203 (LLVLRLLHGGTLAGALLALYL). Topologically, residues 204-218 (ARLELCDPPHRLAFS) are cytoplasmic. Residues 219-239 (MGAGLFSVVGTLLLPGLAALV) form a helical membrane-spanning segment. The Extracellular segment spans residues 240–246 (QDWRLLQ). A helical membrane pass occupies residues 247-267 (GLGALMSGLLLLFWGFPALFP). Over 268–339 (ESPCWLLATG…LRTRVTWRNG (72 aa)) the chain is Cytoplasmic. A helical membrane pass occupies residues 340–357 (LILGFSSLVGGGIRASFR). Residues 358 to 366 (RSLAPQVPT) lie on the Extracellular side of the membrane. Residues 367–387 (FYLPYFLEAGLEAAALVFLLL) traverse the membrane as a helical segment. At 388–395 (TADCCGRR) the chain is on the cytoplasmic side. The helical transmembrane segment at 396–416 (PVLLLGTMVTGLASLLLLAGA) threads the bilayer. The Extracellular segment spans residues 417–420 (QYLP). Residues 421–441 (GWTVLFLSVLGLLASRAVSAL) form a helical membrane-spanning segment. The Cytoplasmic portion of the chain corresponds to 442-448 (SSLFAAE). A helical transmembrane segment spans residues 449–469 (VFPTVIRGAGLGLVLGAGFLG). At 470-483 (QAAGPLDTLHGRQG) the chain is on the extracellular side. Residues 484–504 (FFLQQVVFASLAVLALLCVLL) traverse the membrane as a helical segment. Residues 505–556 (LPESRSRGLPQSLQDADRLRRSPLLRGRPRQDHLPLLPPSNSYWAGHTPEQH) lie on the Cytoplasmic side of the membrane. A disordered region spans residues 524 to 556 (RRSPLLRGRPRQDHLPLLPPSNSYWAGHTPEQH).

Belongs to the major facilitator (TC 2.A.1) superfamily. Organic cation transporter (TC 2.A.1.19) family.

It localises to the membrane. Organic anion transporter that mediates the uptake of ions. In Homo sapiens (Human), this protein is Putative solute carrier family 22 member 31.